Here is a 298-residue protein sequence, read N- to C-terminus: METVHSTFLLLLFVPLTQQAPQSQLDSHVNYEYATGNSEETKFSQDYEDKYLDGKSIKEKETMIIPDEKSLQLQKDEVIPSLPTKKENDEMPTCLLCVCLSGSVYCEEVDIDAVPPLPKESAYLYARFNKIKKLTAKDFADMPNLRRLDFTGNLIEDIEDGTFSKLSLLEELTLAENQLLRLPVLPPKLTLLNAKHNKIKSKGIKANTFKKLNKLSFLYLDHNDLESVPPNLPESLRVIHLQFNSISSLTDDTFCKANDTRYIRERIEEIRLEGNPIALGKHPNSFICLKRLPIGSYF.

Positions Met-1–Gln-19 are cleaved as a signal peptide. A glycan (N-linked (GlcNAc...) (keratan sulfate) asparagine) is linked at Asn-88. 7 LRR repeats span residues Asp-112 to Ile-131, Lys-132 to Ile-155, Glu-156 to Leu-179, Leu-180 to Ile-199, Lys-200 to Leu-225, Glu-226 to Ile-246, and Ser-247 to Ile-277. A disulfide bond links Cys-255 and Cys-288. The N-linked (GlcNAc...) (keratan sulfate) asparagine glycan is linked to Asn-258.

Belongs to the small leucine-rich proteoglycan (SLRP) family. SLRP class III subfamily. Contains keratan sulfate.

It localises to the secreted. Its subcellular location is the extracellular space. The protein resides in the extracellular matrix. Functionally, induces bone formation in conjunction with TGF-beta-1 or TGF-beta-2. The sequence is that of Mimecan (Ogn) from Mus musculus (Mouse).